A 341-amino-acid chain; its full sequence is S-adenosylmethionine:tRNA ribosyltransferase-isomerase (341 aa).

Belongs to the QueA family. Monomer.

It is found in the cytoplasm. The catalysed reaction is 7-aminomethyl-7-carbaguanosine(34) in tRNA + S-adenosyl-L-methionine = epoxyqueuosine(34) in tRNA + adenine + L-methionine + 2 H(+). It functions in the pathway tRNA modification; tRNA-queuosine biosynthesis. Transfers and isomerizes the ribose moiety from AdoMet to the 7-aminomethyl group of 7-deazaguanine (preQ1-tRNA) to give epoxyqueuosine (oQ-tRNA). This is S-adenosylmethionine:tRNA ribosyltransferase-isomerase from Acetivibrio thermocellus (strain ATCC 27405 / DSM 1237 / JCM 9322 / NBRC 103400 / NCIMB 10682 / NRRL B-4536 / VPI 7372) (Clostridium thermocellum).